The sequence spans 139 residues: NADH-quinone oxidoreductase subunit A (139 aa).

Helical transmembrane passes span 11 to 31 (LWPL…MLAL), 70 to 90 (LIAI…AWAI), and 97 to 117 (WPGY…LVYL).

Belongs to the complex I subunit 3 family. NDH-1 is composed of 14 different subunits. Subunits NuoA, H, J, K, L, M, N constitute the membrane sector of the complex.

The protein resides in the cell inner membrane. The catalysed reaction is a quinone + NADH + 5 H(+)(in) = a quinol + NAD(+) + 4 H(+)(out). Its function is as follows. NDH-1 shuttles electrons from NADH, via FMN and iron-sulfur (Fe-S) centers, to quinones in the respiratory chain. The immediate electron acceptor for the enzyme in this species is believed to be ubiquinone. Couples the redox reaction to proton translocation (for every two electrons transferred, four hydrogen ions are translocated across the cytoplasmic membrane), and thus conserves the redox energy in a proton gradient. The chain is NADH-quinone oxidoreductase subunit A from Methylococcus capsulatus (strain ATCC 33009 / NCIMB 11132 / Bath).